Consider the following 565-residue polypeptide: Pentatricopeptide repeat-containing protein At3g20730 (565 aa).

PPR repeat units lie at residues 12–46 (SPSL…GFCS), 47–77 (NLQL…ISKR), 78–112 (DVVS…DVKA), 113–147 (NQFT…NCAG), 148–178 (NLIV…MKER), 179–213 (DLVS…GKKP), 214–248 (DCFT…GFGR), 249–279 (SSAL…TKKR), 280–315 (DLLS…KTKM), 316–351 (DEVV…QIRF), 352–382 (DVAL…MKEK), 383–417 (DVRS…RIKP), 418–448 (NDVT…MINK), and 454–484 (REEH…KEGI). Residues 491 to 565 (TWGAFLDACR…NKAPGYSLVY (75 aa)) form a type E motif; degenerate region.

The protein belongs to the PPR family. PCMP-E subfamily.

The chain is Pentatricopeptide repeat-containing protein At3g20730 (PCMP-E94) from Arabidopsis thaliana (Mouse-ear cress).